The chain runs to 507 residues: Secreted lipase ARB_01498 (507 aa).

The N-terminal stretch at 1–21 (MFVQLLTYGLVAASTLQGVFA) is a signal peptide. Serine 196 acts as the Acyl-ester intermediate in catalysis. 4 N-linked (GlcNAc...) asparagine glycosylation sites follow: asparagine 262, asparagine 321, asparagine 358, and asparagine 416.

It belongs to the type-B carboxylesterase/lipase family.

Its subcellular location is the secreted. The catalysed reaction is a triacylglycerol + H2O = a diacylglycerol + a fatty acid + H(+). This chain is Secreted lipase ARB_01498, found in Arthroderma benhamiae (strain ATCC MYA-4681 / CBS 112371) (Trichophyton mentagrophytes).